Reading from the N-terminus, the 323-residue chain is Leucine-rich repeat-containing protein 46 (323 aa).

4 LRR repeats span residues 49–70 (DLET…ERLR), 71–92 (NIHS…ACIT), 93–114 (SLRF…LDLQ), and 115–135 (YLQF…DELP). The LRRCT domain maps to 146–188 (NPCTNQDGYRKMVIGALPLLLDLDKQPILERWTSDEEDKSSDE). Residue Thr-178 is modified to Phosphothreonine. A phosphoserine mark is found at Ser-179, Ser-185, and Ser-186. Positions 203–228 (RGFFKDLEQELHQHQERRQQAALTEH) form a coiled coil. The interval 252–323 (DCSPAVTEEP…TKSTNKRGTK (72 aa)) is disordered. The segment covering 269-290 (ATSSTQMASSSKKQVPRNQKGS) has biased composition (polar residues). Residues 297 to 310 (ALAATASKTSLAAA) show a composition bias toward low complexity. The residue at position 303 (Ser-303) is a Phosphoserine.

It is found in the cell projection. It localises to the cilium. Its subcellular location is the flagellum. Its function is as follows. Required for normal spermatogenesis and male fertility. Plays an important role in sperm flagellum biogenesis. The chain is Leucine-rich repeat-containing protein 46 (Lrrc46) from Rattus norvegicus (Rat).